A 449-amino-acid chain; its full sequence is Hyaluronidase (449 aa).

An N-terminal signal peptide occupies residues 1–23 (MYHLWIKCLAAWIFLKRFNGVHV). 2 disulfides stabilise this stretch: C47–C340 and C211–C227. 3 N-linked (GlcNAc...) asparagine glycosylation sites follow: N67, N103, and N111. E135 serves as the catalytic Proton donor. N153 is a glycosylation site (N-linked (GlcNAc...) asparagine). N357 is a glycosylation site (N-linked (GlcNAc...) asparagine). 3 cysteine pairs are disulfide-bonded: C365–C376, C370–C427, and C429–C438. N-linked (GlcNAc...) asparagine glycosylation occurs at N401. Residues 427 to 438 (CQCYQGWKGLYC) enclose the EGF-like domain.

It belongs to the glycosyl hydrolase 56 family. Monomer. In terms of tissue distribution, expressed by the venom gland.

The protein localises to the secreted. The enzyme catalyses Random hydrolysis of (1-&gt;4)-linkages between N-acetyl-beta-D-glucosamine and D-glucuronate residues in hyaluronate.. Its function is as follows. Snake venom endo-hyaluronidase that degrades hyaluronan to smaller oligosaccharide fragments. In venom, it is not toxic by itself, but increases the diffusion of other venom proteins by degrading the extracellular matrix. In addition, it displays antiedematogenic activity. The chain is Hyaluronidase from Crotalus adamanteus (Eastern diamondback rattlesnake).